The chain runs to 374 residues: 8-amino-7-oxononanoate synthase (374 aa).

Residues Arg22 and Arg29 each contribute to the substrate site. Residue 109-110 participates in pyridoxal 5'-phosphate binding; sequence GY. Substrate is bound at residue His134. Residues Ser182, 207–210, and 227–230 contribute to the pyridoxal 5'-phosphate site; these read DDAH and TLSK. Position 230 is an N6-(pyridoxal phosphate)lysine (Lys230). Thr339 provides a ligand contact to substrate.

The protein belongs to the class-II pyridoxal-phosphate-dependent aminotransferase family. BioF subfamily. As to quaternary structure, homodimer. The cofactor is pyridoxal 5'-phosphate.

The enzyme catalyses 6-carboxyhexanoyl-[ACP] + L-alanine + H(+) = (8S)-8-amino-7-oxononanoate + holo-[ACP] + CO2. The protein operates within cofactor biosynthesis; biotin biosynthesis. Catalyzes the decarboxylative condensation of pimeloyl-[acyl-carrier protein] and L-alanine to produce 8-amino-7-oxononanoate (AON), [acyl-carrier protein], and carbon dioxide. This Methylobacterium radiotolerans (strain ATCC 27329 / DSM 1819 / JCM 2831 / NBRC 15690 / NCIMB 10815 / 0-1) protein is 8-amino-7-oxononanoate synthase.